Here is a 202-residue protein sequence, read N- to C-terminus: dTTP/UTP pyrophosphatase (202 aa).

The active-site Proton acceptor is Asp-83.

It belongs to the Maf family. YhdE subfamily. Requires a divalent metal cation as cofactor.

It localises to the cytoplasm. It catalyses the reaction dTTP + H2O = dTMP + diphosphate + H(+). It carries out the reaction UTP + H2O = UMP + diphosphate + H(+). Functionally, nucleoside triphosphate pyrophosphatase that hydrolyzes dTTP and UTP. May have a dual role in cell division arrest and in preventing the incorporation of modified nucleotides into cellular nucleic acids. This chain is dTTP/UTP pyrophosphatase, found in Polaromonas sp. (strain JS666 / ATCC BAA-500).